The primary structure comprises 211 residues: Large ribosomal subunit protein eL13 (211 aa).

Residue lysine 16 is modified to N6-acetyllysine. Phosphoserine occurs at positions 52, 77, and 106. Glycyl lysine isopeptide (Lys-Gly) (interchain with G-Cter in SUMO2) cross-links involve residues lysine 123 and lysine 145. Residue lysine 174 forms a Glycyl lysine isopeptide (Lys-Gly) (interchain with G-Cter in SUMO1); alternate linkage. Glycyl lysine isopeptide (Lys-Gly) (interchain with G-Cter in SUMO2); alternate cross-links involve residues lysine 174 and lysine 177. Lysine 177 is modified (N6-acetyllysine; alternate).

Belongs to the eukaryotic ribosomal protein eL13 family. In terms of assembly, component of the 60S large ribosomal subunit (LSU).

Its subcellular location is the cytoplasm. Component of the ribosome, a large ribonucleoprotein complex responsible for the synthesis of proteins in the cell. The small ribosomal subunit (SSU) binds messenger RNAs (mRNAs) and translates the encoded message by selecting cognate aminoacyl-transfer RNA (tRNA) molecules. The large subunit (LSU) contains the ribosomal catalytic site termed the peptidyl transferase center (PTC), which catalyzes the formation of peptide bonds, thereby polymerizing the amino acids delivered by tRNAs into a polypeptide chain. The nascent polypeptides leave the ribosome through a tunnel in the LSU and interact with protein factors that function in enzymatic processing, targeting, and the membrane insertion of nascent chains at the exit of the ribosomal tunnel. As part of the LSU, it is probably required for its formation and the maturation of rRNAs. Plays a role in bone development. The sequence is that of Large ribosomal subunit protein eL13 (RPL13) from Cricetulus griseus (Chinese hamster).